A 279-amino-acid polypeptide reads, in one-letter code: Bifunctional protein FolD (279 aa).

NADP(+) contacts are provided by residues 166–168 (GRS) and S191.

The protein belongs to the tetrahydrofolate dehydrogenase/cyclohydrolase family. Homodimer.

The catalysed reaction is (6R)-5,10-methylene-5,6,7,8-tetrahydrofolate + NADP(+) = (6R)-5,10-methenyltetrahydrofolate + NADPH. It catalyses the reaction (6R)-5,10-methenyltetrahydrofolate + H2O = (6R)-10-formyltetrahydrofolate + H(+). It functions in the pathway one-carbon metabolism; tetrahydrofolate interconversion. Catalyzes the oxidation of 5,10-methylenetetrahydrofolate to 5,10-methenyltetrahydrofolate and then the hydrolysis of 5,10-methenyltetrahydrofolate to 10-formyltetrahydrofolate. This Shouchella clausii (strain KSM-K16) (Alkalihalobacillus clausii) protein is Bifunctional protein FolD.